The primary structure comprises 90 residues: Carboxysome shell vertex protein CsoS4A (90 aa).

Residues 1-78 (MKIYKVDKTL…SDLTIVGIID (78 aa)) form the BMV domain.

This sequence belongs to the CcmL/EutN family. CsoS4 subfamily. In terms of assembly, homopentamer.

It localises to the carboxysome. Its function is as follows. Probably forms vertices in the carboxysome, a polyhedral inclusion where RuBisCO (ribulose bisphosphate carboxylase, cbbL-cbbS) is sequestered. Has been modeled to induce curvature upon insertion into an otherwise flat hexagonal layer of major carboxysome subunits. This chain is Carboxysome shell vertex protein CsoS4A, found in Hydrogenovibrio crunogenus (strain DSM 25203 / XCL-2) (Thiomicrospira crunogena).